The sequence spans 224 residues: LexA repressor (224 aa).

The H-T-H motif DNA-binding region spans 31-51 (RAEIAAELGFKSANAAEEHLQ). Catalysis depends on for autocatalytic cleavage activity residues serine 142 and lysine 179.

It belongs to the peptidase S24 family. Homodimer.

It catalyses the reaction Hydrolysis of Ala-|-Gly bond in repressor LexA.. In terms of biological role, represses a number of genes involved in the response to DNA damage (SOS response), including recA and lexA. In the presence of single-stranded DNA, RecA interacts with LexA causing an autocatalytic cleavage which disrupts the DNA-binding part of LexA, leading to derepression of the SOS regulon and eventually DNA repair. The sequence is that of LexA repressor from Acidovorax ebreus (strain TPSY) (Diaphorobacter sp. (strain TPSY)).